Reading from the N-terminus, the 174-residue chain is DNA endonuclease I-HmuI (174 aa).

This chain is DNA endonuclease I-HmuI, found in Bacillus subtilis (Bacteriophage SP01).